An 861-amino-acid polypeptide reads, in one-letter code: DNA mismatch repair protein MutS (861 aa).

616–623 (GPNMGGKS) lines the ATP pocket.

Belongs to the DNA mismatch repair MutS family.

In terms of biological role, this protein is involved in the repair of mismatches in DNA. It is possible that it carries out the mismatch recognition step. This protein has a weak ATPase activity. The sequence is that of DNA mismatch repair protein MutS from Haemophilus influenzae (strain PittEE).